The chain runs to 250 residues: Pyrroloquinoline-quinone synthase (250 aa).

This sequence belongs to the PqqC family.

The catalysed reaction is 6-(2-amino-2-carboxyethyl)-7,8-dioxo-1,2,3,4,7,8-hexahydroquinoline-2,4-dicarboxylate + 3 O2 = pyrroloquinoline quinone + 2 H2O2 + 2 H2O + H(+). The protein operates within cofactor biosynthesis; pyrroloquinoline quinone biosynthesis. Functionally, ring cyclization and eight-electron oxidation of 3a-(2-amino-2-carboxyethyl)-4,5-dioxo-4,5,6,7,8,9-hexahydroquinoline-7,9-dicarboxylic-acid to PQQ. The sequence is that of Pyrroloquinoline-quinone synthase from Xanthomonas axonopodis pv. citri (strain 306).